The following is a 195-amino-acid chain: Probable DNA-directed RNA polymerase subunit delta (195 aa).

Positions phenylalanine 14–tryptophan 81 constitute an HTH HARE-type domain. Composition is skewed to acidic residues over residues aspartate 120–isoleucine 172 and glycine 181–lysine 195. A disordered region spans residues aspartate 120–lysine 195.

The protein belongs to the RpoE family. In terms of assembly, RNAP is composed of a core of 2 alpha, a beta and a beta' subunits. The core is associated with a delta subunit and one of several sigma factors.

Functionally, participates in both the initiation and recycling phases of transcription. In the presence of the delta subunit, RNAP displays an increased specificity of transcription, a decreased affinity for nucleic acids, and an increased efficiency of RNA synthesis because of enhanced recycling. The chain is Probable DNA-directed RNA polymerase subunit delta from Leuconostoc mesenteroides subsp. mesenteroides (strain ATCC 8293 / DSM 20343 / BCRC 11652 / CCM 1803 / JCM 6124 / NCDO 523 / NBRC 100496 / NCIMB 8023 / NCTC 12954 / NRRL B-1118 / 37Y).